We begin with the raw amino-acid sequence, 335 residues long: UPF0353 protein Mjls_2492 (335 aa).

The next 2 membrane-spanning stretches (helical) occupy residues Trp18 to Leu38 and Leu67 to Thr87. In terms of domain architecture, VWFA spans Val98–Leu294. Residues Val309–Leu329 form a helical membrane-spanning segment.

It belongs to the UPF0353 family.

The protein localises to the cell membrane. The sequence is that of UPF0353 protein Mjls_2492 from Mycobacterium sp. (strain JLS).